The chain runs to 143 residues: Envelope protein A28 homolog (143 aa).

Residues 1-21 (MNTVQILVVILITTALSFLVF) form a helical; Signal-anchor for type II membrane protein membrane-spanning segment. At 22–143 (QLWYYAENYE…LLRLLMANTS (122 aa)) the chain is on the virion surface side.

Belongs to the poxviridae A28 protein family. In terms of processing, contains two intramolecular disulfide bonds. They are created by the viral disulfide bond formation pathway, a poxvirus-specific pathway that operates on the cytoplasmic side of the MV membranes.

It localises to the virion membrane. In terms of biological role, envelope protein required for virus entry into host cell and for cell-cell fusion (syncytium formation). In Amsacta (AmEPV), this protein is Envelope protein A28 homolog.